Reading from the N-terminus, the 205-residue chain is Holliday junction branch migration complex subunit RuvA (205 aa).

The segment at 1–64 is domain I; sequence MIGRLNGILV…EDAQLLFGFN (64 aa). A domain II region spans residues 65–143; the sequence is NKVERALFRE…NWGNDLFTPF (79 aa). Positions 144 to 156 are flexible linker; sequence SDSAVIEPFSDAT. The tract at residues 157-205 is domain III; the sequence is IANNAADDAVSALVSLGYKLPQAQKAVKSVSKPDMSTEVLIKESLKSML.

The protein belongs to the RuvA family. In terms of assembly, homotetramer. Forms an RuvA(8)-RuvB(12)-Holliday junction (HJ) complex. HJ DNA is sandwiched between 2 RuvA tetramers; dsDNA enters through RuvA and exits via RuvB. An RuvB hexamer assembles on each DNA strand where it exits the tetramer. Each RuvB hexamer is contacted by two RuvA subunits (via domain III) on 2 adjacent RuvB subunits; this complex drives branch migration. In the full resolvosome a probable DNA-RuvA(4)-RuvB(12)-RuvC(2) complex forms which resolves the HJ.

It is found in the cytoplasm. The RuvA-RuvB-RuvC complex processes Holliday junction (HJ) DNA during genetic recombination and DNA repair, while the RuvA-RuvB complex plays an important role in the rescue of blocked DNA replication forks via replication fork reversal (RFR). RuvA specifically binds to HJ cruciform DNA, conferring on it an open structure. The RuvB hexamer acts as an ATP-dependent pump, pulling dsDNA into and through the RuvAB complex. HJ branch migration allows RuvC to scan DNA until it finds its consensus sequence, where it cleaves and resolves the cruciform DNA. In Pseudoalteromonas translucida (strain TAC 125), this protein is Holliday junction branch migration complex subunit RuvA.